Consider the following 381-residue polypeptide: L-lactate dehydrogenase (381 aa).

Residues 1–380 (MIISASTDYR…NRDSLAVSER (380 aa)) form the FMN hydroxy acid dehydrogenase domain. Position 24 (Y24) interacts with substrate. FMN is bound by residues S106 and Q127. Substrate is bound at residue Y129. Residue T155 participates in FMN binding. Residue R164 coordinates substrate. K251 lines the FMN pocket. H275 (proton acceptor) is an active-site residue. A substrate-binding site is contributed by R278. 306–330 (DSGIRTGLDVVRMIALGADSVLLGR) lines the FMN pocket.

The protein belongs to the FMN-dependent alpha-hydroxy acid dehydrogenase family. It depends on FMN as a cofactor.

The protein localises to the cell inner membrane. The catalysed reaction is (S)-lactate + A = pyruvate + AH2. In terms of biological role, catalyzes the conversion of L-lactate to pyruvate. Is coupled to the respiratory chain. In Yersinia pseudotuberculosis serotype O:1b (strain IP 31758), this protein is L-lactate dehydrogenase.